The following is a 505-amino-acid chain: Lysine--tRNA ligase, heat inducible (505 aa).

K114 and K156 each carry N6-acetyllysine. The Mg(2+) site is built by E415 and E422.

The protein belongs to the class-II aminoacyl-tRNA synthetase family. Homodimer. The cofactor is Mg(2+).

The protein resides in the cytoplasm. The catalysed reaction is tRNA(Lys) + L-lysine + ATP = L-lysyl-tRNA(Lys) + AMP + diphosphate. The chain is Lysine--tRNA ligase, heat inducible (lysU) from Escherichia coli O157:H7.